The sequence spans 99 residues: Large ribosomal subunit protein bL27 (99 aa).

A propeptide spanning residues 1–9 (MLIMNLQLF) is cleaved from the precursor.

This sequence belongs to the bacterial ribosomal protein bL27 family. In terms of processing, the N-terminus is cleaved by ribosomal processing cysteine protease Prp.

The protein is Large ribosomal subunit protein bL27 of Clostridium botulinum (strain Alaska E43 / Type E3).